We begin with the raw amino-acid sequence, 119 residues long: Large ribosomal subunit protein uL14 (119 aa).

The protein belongs to the universal ribosomal protein uL14 family. In terms of assembly, part of the 50S ribosomal subunit. Forms a cluster with proteins L3 and L19. In the 70S ribosome, L14 and L19 interact and together make contacts with the 16S rRNA in bridges B5 and B8.

Functionally, binds to 23S rRNA. Forms part of two intersubunit bridges in the 70S ribosome. This chain is Large ribosomal subunit protein uL14, found in Ehrlichia chaffeensis (strain ATCC CRL-10679 / Arkansas).